The primary structure comprises 527 residues: Bifunctional purine biosynthesis protein PurH (527 aa).

Residues 1–149 (MASDFLPVRR…KNFARVAVAT (149 aa)) enclose the MGS-like domain.

It belongs to the PurH family.

The enzyme catalyses (6R)-10-formyltetrahydrofolate + 5-amino-1-(5-phospho-beta-D-ribosyl)imidazole-4-carboxamide = 5-formamido-1-(5-phospho-D-ribosyl)imidazole-4-carboxamide + (6S)-5,6,7,8-tetrahydrofolate. It carries out the reaction IMP + H2O = 5-formamido-1-(5-phospho-D-ribosyl)imidazole-4-carboxamide. The protein operates within purine metabolism; IMP biosynthesis via de novo pathway; 5-formamido-1-(5-phospho-D-ribosyl)imidazole-4-carboxamide from 5-amino-1-(5-phospho-D-ribosyl)imidazole-4-carboxamide (10-formyl THF route): step 1/1. It participates in purine metabolism; IMP biosynthesis via de novo pathway; IMP from 5-formamido-1-(5-phospho-D-ribosyl)imidazole-4-carboxamide: step 1/1. This is Bifunctional purine biosynthesis protein PurH from Xanthomonas oryzae pv. oryzae (strain PXO99A).